The following is a 354-amino-acid chain: Uroporphyrinogen decarboxylase (354 aa).

Substrate is bound by residues 27-31 (RQAGR), Asp77, Tyr154, Thr209, and His327.

This sequence belongs to the uroporphyrinogen decarboxylase family. In terms of assembly, homodimer.

The protein resides in the cytoplasm. It catalyses the reaction uroporphyrinogen III + 4 H(+) = coproporphyrinogen III + 4 CO2. It functions in the pathway porphyrin-containing compound metabolism; protoporphyrin-IX biosynthesis; coproporphyrinogen-III from 5-aminolevulinate: step 4/4. Catalyzes the decarboxylation of four acetate groups of uroporphyrinogen-III to yield coproporphyrinogen-III. This chain is Uroporphyrinogen decarboxylase, found in Salmonella schwarzengrund (strain CVM19633).